The primary structure comprises 362 residues: Serine/threonine-protein kinase ZRK4 (362 aa).

A disordered region spans residues 1 to 23; sequence MNDQKMSCWRKKSKKKNSEANQR. A Protein kinase domain is found at 35 to 362; it reads LEDLIELCNG…KELKRIERWT (328 aa). ATP is bound by residues 41-49 and K89; that span reads LCNGKSNPI. Catalysis depends on D185, which acts as the Proton acceptor.

The protein belongs to the protein kinase superfamily. Ser/Thr protein kinase family. ZRK subfamily.

It carries out the reaction L-seryl-[protein] + ATP = O-phospho-L-seryl-[protein] + ADP + H(+). The enzyme catalyses L-threonyl-[protein] + ATP = O-phospho-L-threonyl-[protein] + ADP + H(+). The polypeptide is Serine/threonine-protein kinase ZRK4 (Arabidopsis thaliana (Mouse-ear cress)).